The primary structure comprises 143 residues: Nucleoside diphosphate kinase (143 aa).

Positions 11, 59, 87, 93, 104, and 114 each coordinate ATP. The Pros-phosphohistidine intermediate role is filled by histidine 117.

It belongs to the NDK family. As to quaternary structure, homotetramer. Mg(2+) serves as cofactor.

It is found in the cytoplasm. It catalyses the reaction a 2'-deoxyribonucleoside 5'-diphosphate + ATP = a 2'-deoxyribonucleoside 5'-triphosphate + ADP. The enzyme catalyses a ribonucleoside 5'-diphosphate + ATP = a ribonucleoside 5'-triphosphate + ADP. In terms of biological role, major role in the synthesis of nucleoside triphosphates other than ATP. The ATP gamma phosphate is transferred to the NDP beta phosphate via a ping-pong mechanism, using a phosphorylated active-site intermediate. In Erwinia tasmaniensis (strain DSM 17950 / CFBP 7177 / CIP 109463 / NCPPB 4357 / Et1/99), this protein is Nucleoside diphosphate kinase.